A 343-amino-acid chain; its full sequence is Phosphate acyltransferase (343 aa).

The protein belongs to the PlsX family. Homodimer. Probably interacts with PlsY.

It is found in the cytoplasm. The catalysed reaction is a fatty acyl-[ACP] + phosphate = an acyl phosphate + holo-[ACP]. It functions in the pathway lipid metabolism; phospholipid metabolism. Its function is as follows. Catalyzes the reversible formation of acyl-phosphate (acyl-PO(4)) from acyl-[acyl-carrier-protein] (acyl-ACP). This enzyme utilizes acyl-ACP as fatty acyl donor, but not acyl-CoA. This chain is Phosphate acyltransferase, found in Coxiella burnetii (strain CbuG_Q212) (Coxiella burnetii (strain Q212)).